The primary structure comprises 266 residues: Heat-inducible transcription repressor HrcA (266 aa).

The protein belongs to the HrcA family.

Functionally, negative regulator of class I heat shock genes (grpE-dnaK-dnaJ and groELS operons). Prevents heat-shock induction of these operons. The sequence is that of Heat-inducible transcription repressor HrcA from Helicobacter pylori (strain J99 / ATCC 700824) (Campylobacter pylori J99).